Here is a 504-residue protein sequence, read N- to C-terminus: Cytochrome P450 71D8 (504 aa).

Cys-444 contacts heme.

The protein belongs to the cytochrome P450 family. Heme serves as cofactor.

This Glycine max (Soybean) protein is Cytochrome P450 71D8 (CYP71D8).